A 601-amino-acid polypeptide reads, in one-letter code: Cdc42-interacting protein 4 (601 aa).

Residues 1–117 (MDWGTELWDQ…EMKQERKMHF (117 aa)) are required for translocation to the plasma membrane in response to insulin, podosome formation and interaction with AKAP9 and microtubules. Residues 1–264 (MDWGTELWDQ…AANAVDPKND (264 aa)) enclose the F-BAR domain. Residues 67–259 (FSQQQSFVQI…EGMKVAANAV (193 aa)) are a coiled coil. Disordered regions lie at residues 280-358 (GDVE…GRDP), 390-420 (DFSHLPPEQQRKRLQQQLEERSRELQKEVDQ), and 478-543 (NRGD…SPIG). The span at 289-302 (QPMNRAPSDSSLGT) shows a compositional bias: polar residues. Residues 293–537 (RAPSDSSLGT…TEFDEDFEEE (245 aa)) form an interaction with CDC42 region. The segment at 293–601 (RAPSDSSLGT…PTSYLRVTLN (309 aa)) is interaction with PDE6G. A phosphoserine mark is found at Ser296, Ser298, and Ser299. Basic residues predominate over residues 314-329 (GRSRTKRWPFGKKNKP). Ser335 bears the Phosphoserine mark. Low complexity predominate over residues 336-346 (PLGGPVPSALP). Ser351 is modified (phosphoserine). A coiled-coil region spans residues 388–481 (TEDFSHLPPE…ESRVLSNRGD (94 aa)). The REM-1 domain maps to 393–470 (HLPPEQQRKR…VQKYEAWLAE (78 aa)). A compositionally biased stretch (basic and acidic residues) spans 407–420 (LEERSRELQKEVDQ). The interval 471 to 601 (AESRVLSNRG…PTSYLRVTLN (131 aa)) is required for interaction with FASLG and localization to lysosomes. Residue Ser482 is modified to Phosphoserine. Residues 487 to 541 (ARPPDPPTSAPPDSSSNSASQDTKESSEEPPSEESQDTPIYTEFDEDFEEEPTSP) form an interaction with DNM2 and WASL region. A compositionally biased stretch (low complexity) spans 497 to 506 (PPDSSSNSAS). Positions 529 to 538 (EFDEDFEEEP) are enriched in acidic residues. The tract at residues 529–601 (EFDEDFEEEP…PTSYLRVTLN (73 aa)) is interaction with DNM1 and WASL. The tract at residues 538–601 (PTSPIGHCVA…PTSYLRVTLN (64 aa)) is required for podosome formation. An SH3 domain is found at 540 to 601 (SPIGHCVAIY…PTSYLRVTLN (62 aa)). Residues 544–601 (HCVAIYHFEGSSEGTISMAEGEDLSLMEEDKGDGWTRVRRKEGGEGYVPTSYLRVTLN) form an interaction with WAS region. Residues 546–601 (VAIYHFEGSSEGTISMAEGEDLSLMEEDKGDGWTRVRRKEGGEGYVPTSYLRVTLN) form an interaction with ARHGAP17, DAAM1, DIAPH1 and DIAPH2 region.

This sequence belongs to the FNBP1 family. As to quaternary structure, homodimerizes, the dimers can polymerize end-to-end to form filamentous structures. Interacts with AKAP9, ARHGAP17, DAAM1, DIAPH1, DIAPH2, DNM1, FASLG/FASL, GAPVD1, LYN, microtubules, PDE6G, SRC and WAS/WASP. Interacts with the ligand binding domain of the thyroid receptor (TR) in the presence of thyroid hormone. May interact with CTNNB1 and HD/HTT. Interacts specifically with GTP-bound CDC42 and RHOQ. Interacts with DNM2 and WASL. Post-translationally, tyrosine phosphorylated. Also phosphorylated by PKA.

It is found in the cytoplasm. Its subcellular location is the cytoskeleton. It localises to the cell cortex. The protein resides in the lysosome. The protein localises to the golgi apparatus. It is found in the cell membrane. Its subcellular location is the cell projection. It localises to the phagocytic cup. In terms of biological role, required to coordinate membrane tubulation with reorganization of the actin cytoskeleton during endocytosis. Also acts as a link between CDC42 signaling and regulation of the actin cytoskeleton. Binds to lipids such as phosphatidylinositol 4,5-bisphosphate and phosphatidylserine and promotes membrane invagination and the formation of tubules. Also enhances actin polymerization in the vicinity of membrane tubules by recruiting WASL/N-WASP which in turn activates the Arp2/3 complex. Actin polymerization and dynamin may promote the fission of membrane tubules to form endocytic vesicles. Required for the formation of podosomes, actin-rich adhesion structures specific to monocyte-derived cells. Required for translocation of GLUT4 to the plasma membrane in response to insulin signaling. May be required for the lysosomal retention of FASLG/FASL. This is Cdc42-interacting protein 4 (TRIP10) from Pongo abelii (Sumatran orangutan).